The chain runs to 355 residues: Tetraacyldisaccharide 4'-kinase (355 aa).

49 to 56 (SAGGTGKT) serves as a coordination point for ATP.

Belongs to the LpxK family.

It carries out the reaction a lipid A disaccharide + ATP = a lipid IVA + ADP + H(+). It functions in the pathway glycolipid biosynthesis; lipid IV(A) biosynthesis; lipid IV(A) from (3R)-3-hydroxytetradecanoyl-[acyl-carrier-protein] and UDP-N-acetyl-alpha-D-glucosamine: step 6/6. Transfers the gamma-phosphate of ATP to the 4'-position of a tetraacyldisaccharide 1-phosphate intermediate (termed DS-1-P) to form tetraacyldisaccharide 1,4'-bis-phosphate (lipid IVA). This chain is Tetraacyldisaccharide 4'-kinase, found in Chlorobium phaeobacteroides (strain DSM 266 / SMG 266 / 2430).